A 336-amino-acid polypeptide reads, in one-letter code: MGHPLLLPLLLLLLHTGVPASWGLRCMQCNGHGNCRVEECALGQNLCRTTSVRHWEEGEEVEMVEKSCTHSEKTNRTMSFRTGVRITTLTEAVCGLDLCNQDSSGPAVTFPRSRFLECISCGSSDMSCERGRHQSLQCTSPKEQCLDMVTHRTSEAEEGRPKDDHHIRGCGHLPGCPGIAGFHSEDTFHFLKCCNTTKCNGGPILSLANLPKNGHRCYSCQGNSTHGCSSENTVLTDCRGPMNQCLEATGIYEPLSESYMVRGCATSSMCQHDHVSDAFSMSHIDVACCTENDCNNPAEDIQHRSEAAPQPGPAHLSLTITGLMTARLWGGTLLWT.

The signal sequence occupies residues 1 to 23 (MGHPLLLPLLLLLLHTGVPASWG). 3 UPAR/Ly6 domains span residues 24 to 111 (LRCM…VTFP), 116 to 208 (LECI…LSLA), and 215 to 302 (HRCY…EDIQ). 3 disulfides stabilise this stretch: Cys-26-Cys-47, Cys-29-Cys-35, and Cys-40-Cys-68. The N-linked (GlcNAc...) asparagine glycan is linked to Asn-75. Intrachain disulfides connect Cys-94-Cys-99, Cys-118-Cys-145, Cys-121-Cys-128, Cys-138-Cys-170, Cys-176-Cys-193, Cys-194-Cys-199, Cys-217-Cys-245, Cys-220-Cys-228, Cys-238-Cys-264, Cys-270-Cys-288, and Cys-289-Cys-294. N-linked (GlcNAc...) asparagine glycosylation is found at Asn-195 and Asn-223.

As to quaternary structure, monomer. Interacts (via the UPAR/Ly6 domains) with SRPX2. Interacts with MRC2. Interacts with FAP (seprase); the interaction occurs at the cell surface of invadopodia membrane. Interacts with SORL1 (via N-terminal ectodomain); this interaction decreases PLAUR internalization. The ternary complex composed of PLAUR-PLAU-SERPINE1 also interacts with SORL1.

It localises to the cell membrane. Its subcellular location is the cell projection. The protein resides in the invadopodium membrane. Acts as a receptor for urokinase plasminogen activator. Plays a role in localizing and promoting plasmin formation. Mediates the proteolysis-independent signal transduction activation effects of U-PA. It is subject to negative-feedback regulation by U-PA which cleaves it into an inactive form. The protein is Urokinase plasminogen activator surface receptor (PLAUR) of Aotus trivirgatus (Three-striped night monkey).